The sequence spans 397 residues: Protein WRKY1 (397 aa).

The WRKY DNA-binding region spans Lys326 to Val392.

It belongs to the WRKY group II-d family. Interacts with RS2. In terms of tissue distribution, more abundant in apices and young leaf primordia than in fully expanded leaf tissues.

The protein resides in the nucleus. Transcription factor. Interacts specifically with the W box (5'-(T)TGAC[CT]-3'), a frequently occurring elicitor-responsive cis-acting element. This Zea mays (Maize) protein is Protein WRKY1.